The following is a 233-amino-acid chain: Small ribosomal subunit protein uS2 (233 aa).

The protein belongs to the universal ribosomal protein uS2 family.

The chain is Small ribosomal subunit protein uS2 from Clostridium beijerinckii (strain ATCC 51743 / NCIMB 8052) (Clostridium acetobutylicum).